Reading from the N-terminus, the 295-residue chain is Nucleotide-binding protein PEPE_0450 (295 aa).

12–19 (GMSGAGKT) is an ATP binding site. 62–65 (DLRS) is a GTP binding site.

Belongs to the RapZ-like family.

Displays ATPase and GTPase activities. In Pediococcus pentosaceus (strain ATCC 25745 / CCUG 21536 / LMG 10740 / 183-1w), this protein is Nucleotide-binding protein PEPE_0450.